The primary structure comprises 1449 residues: Disease resistance protein RPP5 (1449 aa).

The 169-residue stretch at 10 to 178 (RRYDVFPSFS…KISNDVSNKL (169 aa)) folds into the TIR domain. Glu-85 is a catalytic residue. An NB-ARC domain is found at 192–446 (EAHIEAIKSV…IACLFNGFEV (255 aa)). LRR repeat units follow at residues 549 to 573 (MRNLQYLKIGDWSDGGQPQSLVYLP), 574 to 595 (LKLRLLDWDDCPLKSLPSTFKA), 597 to 618 (YLVNLIMKYSKLEKLWEGTLPL), 619 to 642 (GSLKKMNLLCSKNLKEIPDLSNAR), 644 to 665 (LEELDLEGCESLVTLPSSIQNA), 687 to 710 (MCNLEYLSVDCSRVEGTQGIVYFP), 712 to 732 (KLRLLLWNNCPLKRLHSNFKV), 733 to 755 (EYLVKLRMENSDLEKLWDGTQPL), 756 to 779 (GRLKQMFLRGSKYLKEIPDLSLAI), 802 to 825 (AIKLIYLDISDCKKLESFPTDLNL), 826 to 849 (ESLEYLNLTGCPNLRNFPAIKMGC), 915 to 939 (LGSLEEMDLSESENLTEIPDLSKAT), 941 to 962 (LKHLYLNNCKSLVTLPSTIGNL), 963 to 985 (QKLVRLEMKECTGLEVLPTDVNL), 986 to 1011 (SSLETLDLSGCSSLRTFPLISKSIKW), 1028 to 1052 (ATKLESLILNNCKSLVTLPSTIGNL), 1053 to 1077 (QNLRRLYMKRCTGLEVLPTDVNLSS), 1096 to 1119 (STNIVWLYLENTAIGEVPCCIEDF), and 1120 to 1143 (TRLRVLLMYCCQRLKNISPNIFRL).

As to quaternary structure, interacts with RSH1.

It catalyses the reaction NAD(+) + H2O = ADP-D-ribose + nicotinamide + H(+). In terms of biological role, TIR-NB-LRR receptor-like protein that confers resistance to the pathogen Hyaloperonospora arabidopsis isolate Noco2 (downy mildew disease). Confers resistance to H.arabidopsis isolates Emoy2, Emwa1 and Noco2. This Arabidopsis thaliana (Mouse-ear cress) protein is Disease resistance protein RPP5.